Reading from the N-terminus, the 473-residue chain is GDP-fucose protein O-fucosyltransferase 2 (473 aa).

The first 25 residues, 1–25 (MKNMIYNLISISLYSLIIILTDIYA), serve as a signal peptide directing secretion. GDP-beta-L-fucose is bound by residues 59-63 (GEGFN), 283-285 (HLR), and 379-380 (RF). E60 acts as the Proton acceptor in catalysis.

The protein belongs to the glycosyltransferase 68 family.

It localises to the endoplasmic reticulum. It carries out the reaction L-seryl-[protein] + GDP-beta-L-fucose = 3-O-(alpha-L-fucosyl)-L-seryl-[protein] + GDP + H(+). The enzyme catalyses L-threonyl-[protein] + GDP-beta-L-fucose = 3-O-(alpha-L-fucosyl)-L-threonyl-[protein] + GDP + H(+). It functions in the pathway protein modification; protein glycosylation. Catalyzes the reaction that attaches fucose through an O-glycosidic linkage to a conserved serine or threonine residue in the consensus sequence C1-X-X-S/T-C2 of thrombospondin type I repeats (TSRs) where C1 and C2 are the first and second cysteines of the repeat, respectively. O-fucosylates sporozoite proteins CSP and TRAP. O-fucosylation regulates stability and intracellular trafficking of TRAP but not of CSP. Dispensable for parasite transmission to the mosquito vector and/or infection of the vertebrate host hepatocytes. The polypeptide is GDP-fucose protein O-fucosyltransferase 2 (Plasmodium berghei (strain Anka)).